We begin with the raw amino-acid sequence, 135 residues long: UPF0225 protein CV_3559 (135 aa).

This sequence belongs to the UPF0225 family.

This Chromobacterium violaceum (strain ATCC 12472 / DSM 30191 / JCM 1249 / CCUG 213 / NBRC 12614 / NCIMB 9131 / NCTC 9757 / MK) protein is UPF0225 protein CV_3559.